A 251-amino-acid chain; its full sequence is Derlin-1 (251 aa).

Residue Ser2 is modified to N-acetylserine. The Cytoplasmic portion of the chain corresponds to Ser2–Thr15. The chain crosses the membrane as a helical span at residues Arg16 to Leu31. The Lumenal portion of the chain corresponds to Gly32–Gly69. A helical transmembrane segment spans residues Phe70 to Gly89. At Ala90–Arg94 the chain is on the cytoplasmic side. The chain crosses the membrane as a helical span at residues Pro95 to Ala115. At Met116–Met122 the chain is on the lumenal side. Residues Ile123–Asn137 form a helical membrane-spanning segment. Residues Arg138–Tyr154 lie on the Cytoplasmic side of the membrane. A helical transmembrane segment spans residues Leu155–Ile166. Residues Gly167 to Val170 are Lumenal-facing. A helical membrane pass occupies residues Ile171 to Arg189. Residues Tyr190–Gln251 lie on the Cytoplasmic side of the membrane. At Ser201 the chain carries Phosphoserine. A Phosphothreonine modification is found at Thr202. Residue Ser226 is modified to Phosphoserine. The segment at Arg229–Gln251 is disordered. Residues Asn241–Leu248 carry the SHP-box motif.

The protein belongs to the derlin family. As to quaternary structure, homotetramer. The four subunits of the tetramer are arranged in a twofold symmetry. Forms homo- and heterooligomers with DERL2 and DERL3; binding to DERL3 is poorer than that between DERL2 and DERL3. Interacts (via SHP-box motif) with VCP. Interacts with AMFR, SELENOS, SEL1L, SELENOK and SYVN1, as well as with SEL1L-SYVN1 and VCP-SELENOS protein complexes; this interaction is weaker than that observed between DERL2 and these complexes. Interacts with NGLY1 and YOD1. Does not bind to EDEM1. Interacts with DNAJB9. Interacts with RNF103. Interacts with HM13. Interacts with XBP1 isoform 1 (via luminal/ectodomain domain); the interaction obviates the need for ectodomain shedding prior HM13/SPP-mediated XBP1 isoform 1 cleavage. Interacts with the signal recognition particle/SRP and the SRP receptor; in the process of endoplasmic reticulum stress-induced pre-emptive quality control. May interact with UBXN6. Interacts with ZFAND2B; probably through VCP. Interacts with CCDC47. Interacts with C18orf32. May interact with TRAM1. Forms a complex with SVIP and VCP/p97.

It is found in the endoplasmic reticulum membrane. Its function is as follows. Functional component of endoplasmic reticulum-associated degradation (ERAD) for misfolded lumenal proteins. Forms homotetramers which encircle a large channel traversing the endoplasmic reticulum (ER) membrane. This allows the retrotranslocation of misfolded proteins from the ER into the cytosol where they are ubiquitinated and degraded by the proteasome. The channel has a lateral gate within the membrane which provides direct access to membrane proteins with no need to reenter the ER lumen first. May mediate the interaction between VCP and the misfolded protein. Also involved in endoplasmic reticulum stress-induced pre-emptive quality control, a mechanism that selectively attenuates the translocation of newly synthesized proteins into the endoplasmic reticulum and reroutes them to the cytosol for proteasomal degradation. By controlling the steady-state expression of the IGF1R receptor, indirectly regulates the insulin-like growth factor receptor signaling pathway. The polypeptide is Derlin-1 (Bos taurus (Bovine)).